The sequence spans 687 residues: Ferric vulnibactin receptor VuuA (687 aa).

The signal sequence occupies residues 1–37 (MAALRPARTSVAEKKTFKLHALSAVVMGLCASGQAYA). In terms of domain architecture, TBDR plug spans 63–185 (TIYDTSSSVQ…SAGAIVMKTN (123 aa)). In terms of domain architecture, TBDR beta-barrel spans 190 to 687 (HFESAVKAGV…MIGASLQLNF (498 aa)). The TonB C-terminal box signature appears at 670-687 (EPLKQQPRMIGASLQLNF).

The protein belongs to the TonB-dependent receptor family.

It localises to the cell outer membrane. In terms of biological role, involved in the uptake of iron in complex with vulnibactin, a catecholate siderophore synthesized by V.vulnificus. Binds and transports ferric vulnibactin across the outer membrane. The energy source is provided by the inner membrane TonB system. The protein is Ferric vulnibactin receptor VuuA of Vibrio vulnificus.